Consider the following 427-residue polypeptide: CD209 antigen (427 aa).

Topologically, residues 1 to 37 (MSDSKEPRLQQLGLLEEEQLRGLGFRQTRGYKSLAGC) are cytoplasmic. 3 consecutive short sequence motifs (endocytosis signal) follow at residues 14 to 15 (LL), 16 to 18 (EEE), and 31 to 34 (YKSL). A helical; Signal-anchor for type II membrane protein membrane pass occupies residues 38–58 (LGHGPLVLQLLSFTLLAALLV). Topologically, residues 59 to 427 (QVSKVPSSIS…ASATPNPPPE (369 aa)) are extracellular. An N-linked (GlcNAc...) asparagine glycan is attached at Asn80. 8 repeat units span residues 96–118 (KLQE…PEKS), 119–141 (KQQE…PEKS), 142–164 (KQQE…PEKS), 165–187 (KQQE…PEKS), 188–210 (KQQE…PEKS), 211–233 (KQQE…PEKS), 234–256 (KQQE…PEKS), and 257–280 (KQQE…RRCP). Positions 96 to 280 (KLQEIYQELT…AVERLCRRCP (185 aa)) are 8 X approximate tandem repeats. 3 disulfide bridges follow: Cys279/Cys290, Cys307/Cys400, and Cys379/Cys392. The 116-residue stretch at 286–401 (FQGNCYFMSN…CNLAKFWICK (116 aa)) folds into the C-type lectin domain. Ca(2+)-binding residues include Glu370, Asn372, Val374, Glu377, Asn388, and Asp389.

Homotetramer. Interacts with C1QBP; the interaction is indicative for a C1q:C1QBP:CD209 signaling complex. Interacts with ICAM2 and ICAM3 by binding to mannose-like carbohydrates. Interacts (via C-type lectin domain) with CEACAM1 (via Lewis X moieties); this interaction is regulated by the glycosylation pattern of CEACAM1 on cell types and regulates contact between dendritic cells and neutrophils.

It localises to the membrane. Pathogen-recognition receptor expressed on the surface of immature dendritic cells (DCs) and involved in initiation of primary immune response. Thought to mediate the endocytosis of pathogens which are subsequently degraded in lysosomal compartments. The receptor returns to the cell membrane surface and the pathogen-derived antigens are presented to resting T-cells via MHC class II proteins to initiate the adaptive immune response. Probably recognizes in a calcium-dependent manner high mannose N-linked oligosaccharides in a variety of pathogen antigens. Functionally, on DCs it is a high affinity receptor for ICAM2 and ICAM3 by binding to mannose-like carbohydrates. May act as a DC rolling receptor that mediates transendothelial migration of DC presursors from blood to tissues by binding endothelial ICAM2. Seems to regulate DC-induced T-cell proliferation by binding to ICAM3 on T-cells in the immunological synapse formed between DC and T-cells. This is CD209 antigen (CD209) from Gorilla gorilla gorilla (Western lowland gorilla).